We begin with the raw amino-acid sequence, 771 residues long: Tubulin monoglycylase TTLL3 (771 aa).

Residues 70–106 (PRPSFSQPRRHDHETETTDEGDSSDEDDLGEEVERDD) are disordered. Residues 86–106 (TTDEGDSSDEDDLGEEVERDD) show a composition bias toward acidic residues. The 347-residue stretch at 220–566 (EGEKMGEVHN…RRSERNTDTG (347 aa)) folds into the TTL domain. ATP-binding positions include Lys339, 345–346 (RG), 377–380 (QKYI), 390–392 (KFD), and 434–435 (CN). Arg345 is an a protein binding site. Ser437 serves as a coordination point for L-glutamate. The Mg(2+) site is built by Asp512, Glu525, and Asn527. An ATP-binding site is contributed by Glu525. Disordered stretches follow at residues 605-640 (LIQSHPEPLSKSTNHKSSLLSSPCTSGKENQSEEVK) and 682-713 (TELHHPQRLSHTQPQSDRPHTHRTRSNLPTLY). The span at 614–633 (SKSTNHKSSLLSSPCTSGKE) shows a compositional bias: polar residues.

It depends on Mg(2+) as a cofactor.

It localises to the cytoplasm. The protein localises to the cytoskeleton. The protein resides in the cell projection. Its subcellular location is the cilium. It is found in the cilium axoneme. It localises to the flagellum axoneme. The catalysed reaction is L-glutamyl-[protein] + glycine + ATP = glycyl-L-glutamyl-[protein] + ADP + phosphate + H(+). Its function is as follows. Monoglycylase which modifies alpha- and beta-tubulin, adding a single glycine on the gamma-carboxyl groups of specific glutamate residues to generate monoglycine side chains within the C-terminal tail of tubulin. Not involved in elongation step of the polyglycylation reaction. Preferentially glycylates a beta-tail peptide over the alpha-tail, although shifts its preference toward alpha-tail as beta-tail glutamylation increases. Competes with polyglutamylases for modification site on beta-tubulin substrate, thereby creating an anticorrelation between glycylation and glutamylation reactions. Not involved in elongation step of the polyglycylation reaction. In Danio rerio (Zebrafish), this protein is Tubulin monoglycylase TTLL3 (ttll3).